Here is an 847-residue protein sequence, read N- to C-terminus: DNA mismatch repair protein MutS (847 aa).

G603–S610 is a binding site for ATP.

This sequence belongs to the DNA mismatch repair MutS family.

Its function is as follows. This protein is involved in the repair of mismatches in DNA. It is possible that it carries out the mismatch recognition step. This protein has a weak ATPase activity. This is DNA mismatch repair protein MutS from Streptococcus suis (strain 98HAH33).